Here is a 261-residue protein sequence, read N- to C-terminus: Follistatin-related protein 3 (261 aa).

Positions 1 to 26 are cleaved as a signal peptide; it reads MRPRAPGPLWPLPWGALAWAVGFVGS. Positions 36–107 constitute a TB domain; the sequence is GVCWLQQGRE…SCEGVECGPG (72 aa). 8 cysteine pairs are disulfide-bonded: Cys38–Cys61, Cys48–Cys92, Cys62–Cys95, Cys99–Cys110, Cys104–Cys119, Cys121–Cys153, Cys125–Cys146, and Cys135–Cys167. Asn73 is a glycosylation site (N-linked (GlcNAc...) asparagine). The Follistatin-like 1 domain maps to 99–119; sequence CEGVECGPGKACRMLGGRPRC. 2 consecutive Kazal-like domains span residues 113 to 169 and 189 to 245; these read LGGR…RCRK and SAHC…SCAG. In terms of domain architecture, Follistatin-like 2 spans 170 to 193; sequence SCAHVVCLRPQSCVVDQTGSAHCV. Cystine bridges form between Cys195-Cys229, Cys200-Cys222, and Cys211-Cys243. A glycan (N-linked (GlcNAc...) asparagine) is linked at Asn215. Residues 242-261 form a disordered region; the sequence is SCAGTPEPLDPESEEEENFV. A compositionally biased stretch (acidic residues) spans 250-261; it reads LDPESEEEENFV.

In terms of assembly, interacts with INHBA and INHBB. Interacts with FN1. Interacts with ADAM12. Interacts with MLLT10; the interaction enhances MLLT10 in vitro transcriptional activity and self-association. Interacts with MSTN.

Its subcellular location is the secreted. It is found in the nucleus. The secreted form is a binding and antagonizing protein for members of the TGF-beta family, such as activin, BMP2 and MSTN. Inhibits activin A-, activin B-, BMP2- and MSDT-induced cellular signaling; more effective on activin A than on activin B. Involved in bone formation; inhibits osteoclast differentiation. Involved in hematopoiesis; involved in differentiation of hemopoietic progenitor cells, increases hematopoietic cell adhesion to fibronectin and seems to contribute to the adhesion of hematopoietic precursor cells to the bone marrow stroma. The nuclear form is probably involved in transcriptional regulation via interaction with MLLT10. This chain is Follistatin-related protein 3 (FSTL3), found in Bos taurus (Bovine).